A 208-amino-acid polypeptide reads, in one-letter code: Large ribosomal subunit protein bL25 (208 aa).

The segment at 1–20 is disordered; sequence MANHQIKAQRRKDEGKGASR.

It belongs to the bacterial ribosomal protein bL25 family. CTC subfamily. Part of the 50S ribosomal subunit; part of the 5S rRNA/L5/L18/L25 subcomplex. Contacts the 5S rRNA. Binds to the 5S rRNA independently of L5 and L18.

This is one of the proteins that binds to the 5S RNA in the ribosome where it forms part of the central protuberance. This Xylella fastidiosa (strain 9a5c) protein is Large ribosomal subunit protein bL25.